A 641-amino-acid polypeptide reads, in one-letter code: Calpain-6 (641 aa).

Positions 26-343 (LFCDPTFLPE…FHKLNVCRNV (318 aa)) constitute a Calpain catalytic domain. The tract at residues 344 to 495 (NNPIFGRKEL…IFSEVPVQLR (152 aa)) is domain III. The 124-residue stretch at 498–621 (TLDMPKMSCW…YLRKKGGPTA (124 aa)) folds into the C2 domain.

This sequence belongs to the peptidase C2 family. In terms of assembly, interacts (via domain III) with microtubules. Interacts (via domain II) with ARHGEF2 (via the N-terminal zinc finger). Expressed only in placenta.

It localises to the cytoplasm. The protein resides in the perinuclear region. It is found in the cytoskeleton. Its subcellular location is the spindle. In terms of biological role, microtubule-stabilizing protein that may be involved in the regulation of microtubule dynamics and cytoskeletal organization. May act as a regulator of RAC1 activity through interaction with ARHGEF2 to control lamellipodial formation and cell mobility. Does not seem to have protease activity as it has lost the active site residues. This chain is Calpain-6 (CAPN6), found in Homo sapiens (Human).